An 832-amino-acid chain; its full sequence is Armadillo segment polarity protein (832 aa).

Residues 1–20 show a composition bias toward polar residues; sequence MSYQMPQNRTMSHNPYNSSD. Residues 1–24 form a disordered region; sequence MSYQMPQNRTMSHNPYNSSDMPMP. ARM repeat units lie at residues 146–185, 188–228, 230–269, 272–311, 356–395, 397–434, 483–524, 594–634, and 636–675; these read NYQD…QLSK, ASRH…NLSH, RQGL…NLLL, DGSK…ILAY, SSNK…NLSD, ATKV…NLTC, SESA…NLAL, ELNR…ELAV, and KEVA…KMSE. The segment at 721–832 is disordered; that stretch reads AYEGLYGQGP…QVAAWYDTDL (112 aa). A compositionally biased stretch (low complexity) spans 767–777; that stretch reads PAGSNPNAGNN.

This sequence belongs to the beta-catenin family.

It is found in the cytoplasm. The protein localises to the cell membrane. Its subcellular location is the cell junction. It localises to the adherens junction. Its function is as follows. May associate with CadN and participate in the transmission of developmental information. Can associate with alpha-catenin. Accumulates through wg signaling; arm function in wg signal transduction is required early in development for determination of neuroblast fate. Arm and Abl proteins function cooperatively at adherens junctions in both the CNS and epidermis. This Aedes aegypti (Yellowfever mosquito) protein is Armadillo segment polarity protein.